The chain runs to 346 residues: NADH-ubiquinone oxidoreductase chain 2 (346 aa).

11 helical membrane-spanning segments follow: residues 3 to 23 (PLIF…VMMS), 25 to 45 (HWLM…PILM), 59 to 79 (YFLT…INLM), 96 to 116 (IIMT…FWVP), 122 to 142 (ISLT…MSIL), 149 to 169 (INLN…GWGG), 178 to 198 (IMAY…VYNP), 200 to 220 (LTML…MLFI), 242 to 262 (TLIL…GFMP), 274 to 294 (SSII…YFYM), and 322 to 342 (ITLL…TPML).

The protein belongs to the complex I subunit 2 family. Core subunit of respiratory chain NADH dehydrogenase (Complex I) which is composed of 45 different subunits. Interacts with TMEM242.

The protein resides in the mitochondrion inner membrane. The catalysed reaction is a ubiquinone + NADH + 5 H(+)(in) = a ubiquinol + NAD(+) + 4 H(+)(out). Functionally, core subunit of the mitochondrial membrane respiratory chain NADH dehydrogenase (Complex I) which catalyzes electron transfer from NADH through the respiratory chain, using ubiquinone as an electron acceptor. Essential for the catalytic activity and assembly of complex I. The polypeptide is NADH-ubiquinone oxidoreductase chain 2 (Equus caballus (Horse)).